The sequence spans 182 residues: Ribosome maturation factor RimM (182 aa).

One can recognise a PRC barrel domain in the interval 103–182 (EDEFYWRELF…RIEVDWDPGF (80 aa)).

Belongs to the RimM family. As to quaternary structure, binds ribosomal protein uS19.

The protein localises to the cytoplasm. Its function is as follows. An accessory protein needed during the final step in the assembly of 30S ribosomal subunit, possibly for assembly of the head region. Essential for efficient processing of 16S rRNA. May be needed both before and after RbfA during the maturation of 16S rRNA. It has affinity for free ribosomal 30S subunits but not for 70S ribosomes. The sequence is that of Ribosome maturation factor RimM from Vibrio vulnificus (strain CMCP6).